The following is a 125-amino-acid chain: Large ribosomal subunit protein bL12 (125 aa).

The protein belongs to the bacterial ribosomal protein bL12 family. In terms of assembly, homodimer. Part of the ribosomal stalk of the 50S ribosomal subunit. Forms a multimeric L10(L12)X complex, where L10 forms an elongated spine to which 2 to 4 L12 dimers bind in a sequential fashion. Binds GTP-bound translation factors.

Its function is as follows. Forms part of the ribosomal stalk which helps the ribosome interact with GTP-bound translation factors. Is thus essential for accurate translation. The protein is Large ribosomal subunit protein bL12 of Campylobacter jejuni subsp. jejuni serotype O:6 (strain 81116 / NCTC 11828).